We begin with the raw amino-acid sequence, 173 residues long: MTRAFYIGRFQPYHFGHHAVIARIAEEVDELVIGIGSAQKSHEAIDPFTAGERVLMVYNALEHLSIRHYVVPIEDVRYNSIWVHHVVSRTPRFDVVYSNNPLVIQLFREAGFCVKESPLYVRERYSGTEIRRRMIEGEKWEHLVPKPVAEVIKSFDGVSRLKNVSTSDSNFSL.

This sequence belongs to the archaeal NMN adenylyltransferase family.

Its subcellular location is the cytoplasm. The catalysed reaction is beta-nicotinamide D-ribonucleotide + ATP + H(+) = diphosphate + NAD(+). The protein operates within cofactor biosynthesis; NAD(+) biosynthesis; NAD(+) from nicotinamide D-ribonucleotide: step 1/1. This is Nicotinamide-nucleotide adenylyltransferase from Methanosarcina mazei (strain ATCC BAA-159 / DSM 3647 / Goe1 / Go1 / JCM 11833 / OCM 88) (Methanosarcina frisia).